Here is a 685-residue protein sequence, read N- to C-terminus: Sorbicillinoid biosynthetic cluster transcription factor sor4 (685 aa).

Residues 1–14 (MGSSATATTTGEST) are compositionally biased toward low complexity. The segment at 1-20 (MGSSATATTTGESTRQQPGL) is disordered. Positions 22–49 (CEECRRRKARCDRVRPKCGICADSGRNC) form a DNA-binding region, zn(2)-C6 fungal-type. Residues 81–112 (GQNDAPSLPQERDSLGCPTPSEKVSPEGDLVS) are disordered.

It localises to the nucleus. Its function is as follows. Transcription factor that acts as the main regulator of the gene cluster that mediates the biosynthesis of sorbicillinoids, a diverse group of yellow secondary metabolites that restrict growth of competing pathogenic fungi but not of bacteria. This Hypocrea jecorina (strain QM6a) (Trichoderma reesei) protein is Sorbicillinoid biosynthetic cluster transcription factor sor4.